The primary structure comprises 294 residues: tRNA pseudouridine synthase B (294 aa).

D38 serves as the catalytic Nucleophile.

The protein belongs to the pseudouridine synthase TruB family. Type 1 subfamily.

It carries out the reaction uridine(55) in tRNA = pseudouridine(55) in tRNA. Responsible for synthesis of pseudouridine from uracil-55 in the psi GC loop of transfer RNAs. The protein is tRNA pseudouridine synthase B of Clostridium perfringens (strain SM101 / Type A).